A 316-amino-acid chain; its full sequence is Protein C4 (316 aa).

The protein belongs to the poxviridae OPG031 protein family.

It is found in the host cytoplasm. The protein resides in the host nucleus. Plays a role in the inhibition of host NF-kappa-B activation. Mechanistically, blocks the subunit p65/RELA translocation into the host nucleus. This chain is Protein C4 (OPG031), found in Homo sapiens (Human).